The primary structure comprises 1428 residues: uncharacterized protein (1428 aa).

3 disordered regions span residues 1–53 (MAKK…AFKV), 249–274 (DIKHTPNKETQPSNQVDDSLKSKDSK), and 377–413 (KNGIQEDSQSTDDSSKDDDNNSESNDMSPHNDAETRA). A compositionally biased stretch (polar residues) spans 16–33 (ATTSIPSRSASSPANKNQ). Positions 34-51 (VKGEKNNKTQKVEPKNAF) are enriched in basic and acidic residues. The span at 256–265 (KETQPSNQVD) shows a compositional bias: polar residues. The Helicase ATP-binding domain maps to 641-811 (IDAVNNSQLL…FEGSNLITIP (171 aa)). Residue 654-661 (GDTGCGKS) coordinates ATP. The short motif at 758-761 (DEVH) is the DEAH box element. A Helicase C-terminal domain is found at 886 to 1064 (LIVYLLKYIF…EVVLRVKMCQ (179 aa)).

It belongs to the helicase family. SKI2 subfamily.

The protein resides in the cytoplasm. This is an uncharacterized protein from Schizosaccharomyces pombe (strain 972 / ATCC 24843) (Fission yeast).